The following is a 313-amino-acid chain: Porphobilinogen deaminase (313 aa).

C242 is modified (S-(dipyrrolylmethanemethyl)cysteine).

It belongs to the HMBS family. As to quaternary structure, monomer. Dipyrromethane is required as a cofactor.

It carries out the reaction 4 porphobilinogen + H2O = hydroxymethylbilane + 4 NH4(+). Its pathway is porphyrin-containing compound metabolism; protoporphyrin-IX biosynthesis; coproporphyrinogen-III from 5-aminolevulinate: step 2/4. Functionally, tetrapolymerization of the monopyrrole PBG into the hydroxymethylbilane pre-uroporphyrinogen in several discrete steps. This is Porphobilinogen deaminase from Erwinia tasmaniensis (strain DSM 17950 / CFBP 7177 / CIP 109463 / NCPPB 4357 / Et1/99).